Here is a 241-residue protein sequence, read N- to C-terminus: MPDAQDKLTLLKNRLGIAWRDEGLLTRALTHSSFTYENRQNGLENNQRLEFLGDAVLELAVSDYLYRSKPEMDEGDLTKLRASVVCEPSLARVARELELGTCLYMGKGEERSGGRDRPSILADAFEALLGAVYLDQGLEKAAGLAIKYLAPLIGDVLEGRLERDYKTELQELVQQRGGEQVQYVILKEEGPDHHKSFTAGVLYRGVLVGQGTGRSKKEAEQQAAKKALMKSDLGSACNHKK.

Residues 8–137 (LTLLKNRLGI…LLGAVYLDQG (130 aa)) form the RNase III domain. Residue E50 participates in Mg(2+) binding. D54 is a catalytic residue. Mg(2+) is bound by residues D123 and E126. Residue E126 is part of the active site. A DRBM domain is found at 164 to 233 (DYKTELQELV…AKKALMKSDL (70 aa)). The tract at residues 214–241 (RSKKEAEQQAAKKALMKSDLGSACNHKK) is disordered.

It belongs to the ribonuclease III family. In terms of assembly, homodimer. Mg(2+) serves as cofactor.

It localises to the cytoplasm. It catalyses the reaction Endonucleolytic cleavage to 5'-phosphomonoester.. Functionally, digests double-stranded RNA. Involved in the processing of primary rRNA transcript to yield the immediate precursors to the large and small rRNAs (23S and 16S). Processes some mRNAs, and tRNAs when they are encoded in the rRNA operon. Processes pre-crRNA and tracrRNA of type II CRISPR loci if present in the organism. The polypeptide is Ribonuclease 3 (Pelotomaculum thermopropionicum (strain DSM 13744 / JCM 10971 / SI)).